The following is a 254-amino-acid chain: Ribosomal RNA small subunit methyltransferase J (254 aa).

S-adenosyl-L-methionine contacts are provided by residues 101 to 102 (RD), 117 to 118 (ER), 153 to 154 (SS), and Asp171.

Belongs to the methyltransferase superfamily. RsmJ family.

The protein localises to the cytoplasm. It carries out the reaction guanosine(1516) in 16S rRNA + S-adenosyl-L-methionine = N(2)-methylguanosine(1516) in 16S rRNA + S-adenosyl-L-homocysteine + H(+). Functionally, specifically methylates the guanosine in position 1516 of 16S rRNA. This Enterobacter sp. (strain 638) protein is Ribosomal RNA small subunit methyltransferase J.